The chain runs to 579 residues: Multidrug resistance-like ATP-binding protein MdlA (579 aa).

The region spanning 18 to 303 is the ABC transmembrane type-1 domain; that stretch reads YTIAIFLLIS…FAWMFNIIER (286 aa). The next 6 membrane-spanning stretches (helical) occupy residues 20–40, 53–73, 134–154, 155–175, 247–267, and 281–301; these read IAIF…KLIG, KAPI…IYIL, GVLT…VMIT, QISW…AIII, IIHL…SYMI, and ILYL…FNII. In terms of domain architecture, ABC transporter spans 338-572; that stretch reads VKINYFKYSK…LKQWYGKTYL (235 aa). 370–377 is an ATP binding site; it reads GPTGSGKS.

This sequence belongs to the ABC transporter superfamily. Drug exporter-2 (TC 3.A.1.117) family.

It is found in the cell membrane. The enzyme catalyses ATP + H2O + xenobioticSide 1 = ADP + phosphate + xenobioticSide 2.. In Buchnera aphidicola subsp. Baizongia pistaciae (strain Bp), this protein is Multidrug resistance-like ATP-binding protein MdlA (mdlA).